Reading from the N-terminus, the 278-residue chain is Sulfur carrier protein FdhD (278 aa).

Residue Cys113 is the Cysteine persulfide intermediate of the active site. 251 to 256 (FCRNGR) lines the Mo-bis(molybdopterin guanine dinucleotide) pocket.

It belongs to the FdhD family.

Its subcellular location is the cytoplasm. Its function is as follows. Required for formate dehydrogenase (FDH) activity. Acts as a sulfur carrier protein that transfers sulfur from IscS to the molybdenum cofactor prior to its insertion into FDH. This Shewanella oneidensis (strain ATCC 700550 / JCM 31522 / CIP 106686 / LMG 19005 / NCIMB 14063 / MR-1) protein is Sulfur carrier protein FdhD.